A 269-amino-acid polypeptide reads, in one-letter code: MKNTFDPLRIGDKSFSSRLMLGTGKYRTSEDAINSIKKSECDIVTVAIRRLPTNINSDNISFLKSLDWEKLWLLPNTAGSQTAEDAIRMAFLGHELACQLGQEDNFFVKLEVISDPKYLLPDPIGTLKAAEFLVKKGFTVLPYINADPMLALHLEDLGCATVMPLGSPIGSGQGLNNLANLQIIIENANIPVIVDAGIGAPSEATMAMELGADGVLLNTAVAQSKNPEQMAFAMNLGVQSGRLGYLAGRMEKKQYANPSSPVSQISKIY.

Residue Lys-109 is the Schiff-base intermediate with DXP of the active site. 1-deoxy-D-xylulose 5-phosphate contacts are provided by residues Gly-170, 196–197, and 218–219; these read AG and NT.

The protein belongs to the ThiG family. Homotetramer. Forms heterodimers with either ThiH or ThiS.

The protein localises to the plastid. It localises to the chloroplast. It carries out the reaction [ThiS sulfur-carrier protein]-C-terminal-Gly-aminoethanethioate + 2-iminoacetate + 1-deoxy-D-xylulose 5-phosphate = [ThiS sulfur-carrier protein]-C-terminal Gly-Gly + 2-[(2R,5Z)-2-carboxy-4-methylthiazol-5(2H)-ylidene]ethyl phosphate + 2 H2O + H(+). It participates in cofactor biosynthesis; thiamine diphosphate biosynthesis. In terms of biological role, catalyzes the rearrangement of 1-deoxy-D-xylulose 5-phosphate (DXP) to produce the thiazole phosphate moiety of thiamine. Sulfur is provided by the thiocarboxylate moiety of the carrier protein ThiS. In vitro, sulfur can be provided by H(2)S. This chain is Thiazole synthase, found in Thalassiosira pseudonana (Marine diatom).